The primary structure comprises 273 residues: Putative phosphoenolpyruvate synthase regulatory protein (273 aa).

153–160 (GVSRSGKT) lines the ADP pocket.

It belongs to the pyruvate, phosphate/water dikinase regulatory protein family. PSRP subfamily.

It catalyses the reaction [pyruvate, water dikinase] + ADP = [pyruvate, water dikinase]-phosphate + AMP + H(+). It carries out the reaction [pyruvate, water dikinase]-phosphate + phosphate + H(+) = [pyruvate, water dikinase] + diphosphate. Its function is as follows. Bifunctional serine/threonine kinase and phosphorylase involved in the regulation of the phosphoenolpyruvate synthase (PEPS) by catalyzing its phosphorylation/dephosphorylation. This chain is Putative phosphoenolpyruvate synthase regulatory protein, found in Paracidovorax citrulli (strain AAC00-1) (Acidovorax citrulli).